A 259-amino-acid chain; its full sequence is Ubiquinone/menaquinone biosynthesis C-methyltransferase UbiE (259 aa).

Residues Thr-82, Asp-103, 131-132 (NA), and Ser-148 contribute to the S-adenosyl-L-methionine site.

It belongs to the class I-like SAM-binding methyltransferase superfamily. MenG/UbiE family.

The catalysed reaction is a 2-demethylmenaquinol + S-adenosyl-L-methionine = a menaquinol + S-adenosyl-L-homocysteine + H(+). It carries out the reaction a 2-methoxy-6-(all-trans-polyprenyl)benzene-1,4-diol + S-adenosyl-L-methionine = a 5-methoxy-2-methyl-3-(all-trans-polyprenyl)benzene-1,4-diol + S-adenosyl-L-homocysteine + H(+). It participates in quinol/quinone metabolism; menaquinone biosynthesis; menaquinol from 1,4-dihydroxy-2-naphthoate: step 2/2. Its pathway is cofactor biosynthesis; ubiquinone biosynthesis. Its function is as follows. Methyltransferase required for the conversion of demethylmenaquinol (DMKH2) to menaquinol (MKH2) and the conversion of 2-polyprenyl-6-methoxy-1,4-benzoquinol (DDMQH2) to 2-polyprenyl-3-methyl-6-methoxy-1,4-benzoquinol (DMQH2). The chain is Ubiquinone/menaquinone biosynthesis C-methyltransferase UbiE from Vibrio campbellii (strain ATCC BAA-1116).